Reading from the N-terminus, the 185-residue chain is Casparian strip membrane protein 1 (185 aa).

The Cytoplasmic segment spans residues 1-32 (MKAVSIEAGERSKAKRVHGVNRGISVFDLVLR). Residues 33–53 (IVALVGTLASAVAMGTAGQAL) traverse the membrane as a helical segment. Residues 54–73 (SFSTQIVNFEAQYDDIDAFK) are Extracellular-facing. Residues 74-94 (FFVVSNSITCVYLALSIPISI) form a helical membrane-spanning segment. At 95-106 (FHIIRSRAGKSR) the chain is on the cytoplasmic side. Residues 107-127 (VLLIVLDAIMLVFLTSGASAA) traverse the membrane as a helical segment. The Extracellular portion of the chain corresponds to 128–160 (AAIVYLAHNGNTSTNWFSICQQYTDFCQRSAGS). Asn-138 is a glycosylation site (N-linked (GlcNAc...) asparagine). Residues 161–181 (LIGSFGAMALMVLLIILSSIA) traverse the membrane as a helical segment. Residues 182–185 (LSRR) are Cytoplasmic-facing.

This sequence belongs to the Casparian strip membrane proteins (CASP) family. Homodimer and heterodimers.

It is found in the cell membrane. Regulates membrane-cell wall junctions and localized cell wall deposition. Required for establishment of the Casparian strip membrane domain (CSD) and the subsequent formation of Casparian strips, a cell wall modification of the root endodermis that determines an apoplastic barrier between the intraorganismal apoplasm and the extraorganismal apoplasm and prevents lateral diffusion. The sequence is that of Casparian strip membrane protein 1 from Solanum demissum (Wild potato).